Reading from the N-terminus, the 257-residue chain is Acetylglutamate kinase (257 aa).

Substrate-binding positions include 43-44 (GG), Arg65, and Asn157. ATP is bound by residues 180-185 (DVSGIL) and 208-210 (IIT).

The protein belongs to the acetylglutamate kinase family. ArgB subfamily. Homodimer.

It is found in the cytoplasm. The catalysed reaction is N-acetyl-L-glutamate + ATP = N-acetyl-L-glutamyl 5-phosphate + ADP. It functions in the pathway amino-acid biosynthesis; L-arginine biosynthesis; N(2)-acetyl-L-ornithine from L-glutamate: step 2/4. Functionally, catalyzes the ATP-dependent phosphorylation of N-acetyl-L-glutamate. This Klebsiella pneumoniae (strain 342) protein is Acetylglutamate kinase.